Reading from the N-terminus, the 62-residue chain is Photosystem II reaction center protein Z (62 aa).

Helical transmembrane passes span leucine 8–serine 28 and tryptophan 41–valine 61.

It belongs to the PsbZ family. As to quaternary structure, PSII is composed of 1 copy each of membrane proteins PsbA, PsbB, PsbC, PsbD, PsbE, PsbF, PsbH, PsbI, PsbJ, PsbK, PsbL, PsbM, PsbT, PsbX, PsbY, PsbZ, Psb30/Ycf12, peripheral proteins PsbO, CyanoQ (PsbQ), PsbU, PsbV and a large number of cofactors. It forms dimeric complexes.

The protein localises to the cellular thylakoid membrane. Functionally, may control the interaction of photosystem II (PSII) cores with the light-harvesting antenna, regulates electron flow through the 2 photosystem reaction centers. PSII is a light-driven water plastoquinone oxidoreductase, using light energy to abstract electrons from H(2)O, generating a proton gradient subsequently used for ATP formation. The polypeptide is Photosystem II reaction center protein Z (Acaryochloris marina (strain MBIC 11017)).